Reading from the N-terminus, the 315-residue chain is L-lactate dehydrogenase (315 aa).

Residues V14, D35, and Y66 each contribute to the NAD(+) site. Substrate is bound by residues Q83, R89, and 121–124 (NPVD). Residues 119–121 (VAN) and S144 each bind NAD(+). 149–152 (DTAR) lines the substrate pocket. H176 serves as the catalytic Proton acceptor. Y221 carries the phosphotyrosine modification. Residue T230 coordinates substrate.

This sequence belongs to the LDH/MDH superfamily. LDH family. In terms of assembly, homotetramer.

The protein localises to the cytoplasm. It carries out the reaction (S)-lactate + NAD(+) = pyruvate + NADH + H(+). It participates in fermentation; pyruvate fermentation to lactate; (S)-lactate from pyruvate: step 1/1. Its function is as follows. Catalyzes the conversion of lactate to pyruvate. In Mesomycoplasma hyopneumoniae (strain 232) (Mycoplasma hyopneumoniae), this protein is L-lactate dehydrogenase.